The following is a 46-amino-acid chain: Large ribosomal subunit protein bL34 (46 aa).

Positions 1–17 (MTKRTLRGSVRKKKRTS) are enriched in basic residues. The disordered stretch occupies residues 1 to 26 (MTKRTLRGSVRKKKRTSGFRARMETP).

The protein belongs to the bacterial ribosomal protein bL34 family.

This chain is Large ribosomal subunit protein bL34 (rpmH), found in Pseudanabaena sp. (strain PCC 6903).